The chain runs to 386 residues: DNA replication and repair protein RecF (386 aa).

Residue 30 to 37 (GSNGFGKT) participates in ATP binding.

It belongs to the RecF family.

The protein resides in the cytoplasm. In terms of biological role, the RecF protein is involved in DNA metabolism; it is required for DNA replication and normal SOS inducibility. RecF binds preferentially to single-stranded, linear DNA. It also seems to bind ATP. In Mycolicibacterium vanbaalenii (strain DSM 7251 / JCM 13017 / BCRC 16820 / KCTC 9966 / NRRL B-24157 / PYR-1) (Mycobacterium vanbaalenii), this protein is DNA replication and repair protein RecF.